A 316-amino-acid polypeptide reads, in one-letter code: MSTVQVPKLNTKDLLTLEELTQEEIISLIEFAIYLKKNKQEPLLQGKILGLIFDKHSTRTRVSFEAGMVQLGGHGMFLNGKEMQMGRGETVSDTAKVLSHYIDGIMIRTFSHADVEELAKESSIPVINGLTDDHHPCQALADLMTIYEETNTFKGIKLAYVGDGNNVCHSLLLASAKVGMHMTVATPIGYEPNEEIVKKALAIAKETGAEIEILHNPELAVNEVDFIYTDVWMSMGQEGEEEKYTVFQPYQINKELVTHAKQTYRFLHCLPAHREEEVTGEIIDGPQSIVFEQAGNRLHAQKALLVSLFKNVEELS.

Carbamoyl phosphate-binding positions include 57-60, Q84, R108, and 135-138; these read STRT and HPCQ. Residues N166, D230, and 234–235 each bind L-ornithine; that span reads SM. Residues 269-270 and R297 contribute to the carbamoyl phosphate site; that span reads CL.

It belongs to the aspartate/ornithine carbamoyltransferase superfamily. OTCase family.

The protein resides in the cytoplasm. It carries out the reaction carbamoyl phosphate + L-ornithine = L-citrulline + phosphate + H(+). The protein operates within amino-acid degradation; L-arginine degradation via ADI pathway; carbamoyl phosphate from L-arginine: step 2/2. Functionally, reversibly catalyzes the transfer of the carbamoyl group from carbamoyl phosphate (CP) to the N(epsilon) atom of ornithine (ORN) to produce L-citrulline. This is Ornithine carbamoyltransferase from Bacillus cereus (strain 03BB102).